Reading from the N-terminus, the 264-residue chain is Undecaprenyl-diphosphatase (264 aa).

Helical transmembrane passes span 1–21, 39–59, 83–103, 113–133, 143–163, 184–204, 220–240, and 243–263; these read MEIS…FLPI, QGLA…LFYF, SLLV…GLLF, SGVV…FADL, MTIK…IPGV, ANFS…LESI, LGVI…MGII, and IRML…LYLF.

It belongs to the UppP family.

The protein localises to the cell inner membrane. The enzyme catalyses di-trans,octa-cis-undecaprenyl diphosphate + H2O = di-trans,octa-cis-undecaprenyl phosphate + phosphate + H(+). In terms of biological role, catalyzes the dephosphorylation of undecaprenyl diphosphate (UPP). Confers resistance to bacitracin. The polypeptide is Undecaprenyl-diphosphatase (Campylobacter concisus (strain 13826)).